A 116-amino-acid chain; its full sequence is NADH-ubiquinone oxidoreductase chain 3 (116 aa).

The next 3 membrane-spanning stretches (helical) occupy residues 8–28, 56–76, and 88–108; these read VVAT…LPSL, FFLI…LLPL, and TLLW…YEWF.

It belongs to the complex I subunit 3 family.

It localises to the mitochondrion membrane. It carries out the reaction a ubiquinone + NADH + 5 H(+)(in) = a ubiquinol + NAD(+) + 4 H(+)(out). Its function is as follows. Core subunit of the mitochondrial membrane respiratory chain NADH dehydrogenase (Complex I) that is believed to belong to the minimal assembly required for catalysis. Complex I functions in the transfer of electrons from NADH to the respiratory chain. The immediate electron acceptor for the enzyme is believed to be ubiquinone. In Scyliorhinus canicula (Small-spotted catshark), this protein is NADH-ubiquinone oxidoreductase chain 3 (MT-ND3).